The following is an 83-amino-acid chain: Putative beta-neurotoxin RjAa15f (83 aa).

The first 18 residues, 1-18, serve as a signal peptide directing secretion; the sequence is MKILIFIIASFMLIGVEC. The 64-residue stretch at 19–82 folds into the LCN-type CS-alpha/beta domain; sequence KEGYPMGRNG…VWDSSNNKCV (64 aa). 4 disulfides stabilise this stretch: Cys29/Cys81, Cys33/Cys55, Cys40/Cys62, and Cys44/Cys64.

This sequence belongs to the long (4 C-C) scorpion toxin superfamily. Sodium channel inhibitor family. Beta subfamily. Expressed by the venom gland.

It localises to the secreted. Its function is as follows. Beta toxins bind voltage-independently at site-4 of sodium channels (Nav) and shift the voltage of activation toward more negative potentials thereby affecting sodium channel activation and promoting spontaneous and repetitive firing. The polypeptide is Putative beta-neurotoxin RjAa15f (Rhopalurus junceus (Caribbean blue scorpion)).